The following is a 198-amino-acid chain: Superoxide dismutase [Mn], mitochondrial (198 aa).

Mn(2+) is bound at residue H26. Y34 carries the 3'-nitrotyrosine modification. N6-acetyllysine; alternate is present on residues K44 and K51. Residues K44 and K51 each carry the N6-succinyllysine; alternate modification. H74 provides a ligand contact to Mn(2+). Residue K90 is modified to N6-acetyllysine. An N6-acetyllysine; alternate mark is found at K98 and K106. Residues K98 and K106 each carry the N6-succinyllysine; alternate modification. Mn(2+) is bound by residues D159 and H163. Residue K178 is modified to N6-acetyllysine.

The protein belongs to the iron/manganese superoxide dismutase family. In terms of assembly, homotetramer. It depends on Mn(2+) as a cofactor. Nitrated under oxidative stress. Nitration coupled with oxidation inhibits the catalytic activity. In terms of processing, acetylation at Lys-98 decreases enzymatic activity. Deacetylated by SIRT3 upon exposure to ionizing radiations or after long fasting. Post-translationally, polyubiquitinated; leading to proteasomal degradation. Deubiquitinated by USP36 which increases protein stability.

The protein localises to the mitochondrion matrix. It catalyses the reaction 2 superoxide + 2 H(+) = H2O2 + O2. Functionally, destroys superoxide anion radicals which are normally produced within the cells and which are toxic to biological systems. In Pan troglodytes (Chimpanzee), this protein is Superoxide dismutase [Mn], mitochondrial (SOD2).